Consider the following 154-residue polypeptide: Pseudo histidine-containing phosphotransfer protein 6 (154 aa).

Met1 bears the N-acetylmethionine mark. Residues 41–137 (SPNFVYDVIN…HYLKNMMHEL (97 aa)) enclose the HPt domain.

In terms of assembly, interacts with AHK5.

The protein resides in the cytoplasm. It localises to the cytosol. The protein localises to the nucleus. Functions as a two-component phosphorelay mediator between cytokinin sensor histidine kinases and response regulators (B-type ARRs). Plays an important role in propagating cytokinin signal transduction. The sequence is that of Pseudo histidine-containing phosphotransfer protein 6 (AHP6) from Arabidopsis thaliana (Mouse-ear cress).